The sequence spans 660 residues: Bifunctional polymyxin resistance protein ArnA (660 aa).

The tract at residues 1 to 304 (MKTVVFAYHD…TLGLVQGSRL (304 aa)) is formyltransferase ArnAFT. 86-88 (HLI) provides a ligand contact to (6R)-10-formyltetrahydrofolate. Histidine 104 serves as the catalytic Proton donor; for formyltransferase activity. Residues arginine 114 and 136–140 (VTRAD) contribute to the (6R)-10-formyltetrahydrofolate site. The segment at 314–660 (RRTRVLILGV…RTVDLTDKPS (347 aa)) is dehydrogenase ArnADH. NAD(+) is bound by residues aspartate 347 and 368 to 369 (DI). UDP-alpha-D-glucuronate contacts are provided by residues alanine 393, tyrosine 398, and 432 to 433 (TS). Catalysis depends on glutamate 434, which acts as the Proton acceptor; for decarboxylase activity. Residues arginine 460, asparagine 492, 526-535 (KLIDGGKQKR), and tyrosine 613 contribute to the UDP-alpha-D-glucuronate site. The Proton donor; for decarboxylase activity role is filled by arginine 619.

It in the N-terminal section; belongs to the Fmt family. UDP-L-Ara4N formyltransferase subfamily. The protein in the C-terminal section; belongs to the NAD(P)-dependent epimerase/dehydratase family. UDP-glucuronic acid decarboxylase subfamily. As to quaternary structure, homohexamer, formed by a dimer of trimers.

The catalysed reaction is UDP-alpha-D-glucuronate + NAD(+) = UDP-beta-L-threo-pentopyranos-4-ulose + CO2 + NADH. It carries out the reaction UDP-4-amino-4-deoxy-beta-L-arabinose + (6R)-10-formyltetrahydrofolate = UDP-4-deoxy-4-formamido-beta-L-arabinose + (6S)-5,6,7,8-tetrahydrofolate + H(+). Its pathway is nucleotide-sugar biosynthesis; UDP-4-deoxy-4-formamido-beta-L-arabinose biosynthesis; UDP-4-deoxy-4-formamido-beta-L-arabinose from UDP-alpha-D-glucuronate: step 1/3. It participates in nucleotide-sugar biosynthesis; UDP-4-deoxy-4-formamido-beta-L-arabinose biosynthesis; UDP-4-deoxy-4-formamido-beta-L-arabinose from UDP-alpha-D-glucuronate: step 3/3. The protein operates within bacterial outer membrane biogenesis; lipopolysaccharide biosynthesis. Bifunctional enzyme that catalyzes the oxidative decarboxylation of UDP-glucuronic acid (UDP-GlcUA) to UDP-4-keto-arabinose (UDP-Ara4O) and the addition of a formyl group to UDP-4-amino-4-deoxy-L-arabinose (UDP-L-Ara4N) to form UDP-L-4-formamido-arabinose (UDP-L-Ara4FN). The modified arabinose is attached to lipid A and is required for resistance to polymyxin and cationic antimicrobial peptides. In Shigella dysenteriae serotype 1 (strain Sd197), this protein is Bifunctional polymyxin resistance protein ArnA.